A 107-amino-acid polypeptide reads, in one-letter code: UPF0060 membrane protein RPD_3084 (107 aa).

A run of 4 helical transmembrane segments spans residues 5–25, 31–51, 59–79, and 85–105; these read IIYV…WGWL, VWWL…LTLV, AYAS…WSVE, and RWDV…LWGP.

This sequence belongs to the UPF0060 family.

It is found in the cell inner membrane. This chain is UPF0060 membrane protein RPD_3084, found in Rhodopseudomonas palustris (strain BisB5).